Reading from the N-terminus, the 534-residue chain is Probable cytochrome c oxidase subunit 1 (534 aa).

The next 8 membrane-spanning stretches (helical) occupy residues 35–55 (IMYI…SLLF), 76–96 (VLIT…ALFS), 97–117 (GFGN…FPRL), 120–140 (ISFW…FIDG), 165–185 (VAIF…INLI), 202–222 (PLFV…MPVL), 254–274 (LFWF…FGIV), and 286–306 (IFGY…GFIV). His-81 is a Fe(II)-heme a binding site. His-260 and Tyr-264 together coordinate Cu cation. Positions 260-264 (HPEVY) form a cross-link, 1'-histidyl-3'-tyrosine (His-Tyr). Cu cation contacts are provided by His-309 and His-310. A run of 2 helical transmembrane segments spans residues 320 to 340 (ALIY…IKIF) and 357 to 377 (MLFA…GIIL). Residue His-395 coordinates heme a3. 3 helical membrane-spanning segments follow: residues 396 to 416 (FHYT…YYWF), 433 to 453 (FWIT…LGLA), and 475 to 495 (IGAG…FYTL). Fe(II)-heme a is bound at residue His-397.

This sequence belongs to the heme-copper respiratory oxidase family.

The protein resides in the cell membrane. The catalysed reaction is 4 Fe(II)-[cytochrome c] + O2 + 8 H(+)(in) = 4 Fe(III)-[cytochrome c] + 2 H2O + 4 H(+)(out). It participates in energy metabolism; oxidative phosphorylation. In terms of biological role, cytochrome c oxidase is the component of the respiratory chain that catalyzes the reduction of oxygen to water. Subunits 1-3 form the functional core of the enzyme complex. CO I is the catalytic subunit of the enzyme. Electrons originating in cytochrome c are transferred via the copper A center of subunit 2 and heme A of subunit 1 to the bimetallic center formed by heme A3 and copper B. The protein is Probable cytochrome c oxidase subunit 1 (ctaD) of Rickettsia prowazekii (strain Madrid E).